A 152-amino-acid chain; its full sequence is 3-hydroxyacyl-[acyl-carrier-protein] dehydratase FabZ (152 aa).

Residue histidine 58 is part of the active site.

It belongs to the thioester dehydratase family. FabZ subfamily.

The protein resides in the cytoplasm. It catalyses the reaction a (3R)-hydroxyacyl-[ACP] = a (2E)-enoyl-[ACP] + H2O. Its function is as follows. Involved in unsaturated fatty acids biosynthesis. Catalyzes the dehydration of short chain beta-hydroxyacyl-ACPs and long chain saturated and unsaturated beta-hydroxyacyl-ACPs. This is 3-hydroxyacyl-[acyl-carrier-protein] dehydratase FabZ from Synechococcus sp. (strain RCC307).